A 408-amino-acid chain; its full sequence is Tripartite motif containing 13 (408 aa).

An RING-type zinc finger spans residues 10 to 58; the sequence is CPICCSLFDDPRVLPCSHNFCKKCLDGVLEENSRTMQWRPSSFKCPTCR. The B box-type zinc-finger motif lies at 89 to 131; it reads PKMPVCKEHSDQPLNIFCSTDLKLICGSCATTGEHKKHVFSSI. 4 residues coordinate Zn(2+): cysteine 94, histidine 97, cysteine 117, and histidine 123. Residues 322–342 form a helical membrane-spanning segment; the sequence is ILVVACLILLLVTFLCAYPFI.

It localises to the endoplasmic reticulum membrane. It participates in protein modification; protein ubiquitination. In terms of biological role, E3 ubiquitin ligase involved in the retrotranslocation and turnover of membrane and secretory proteins from the ER through a set of processes named ER-associated degradation (ERAD). This process acts on misfolded proteins as well as in the regulated degradation of correctly folded proteins. This chain is Tripartite motif containing 13 (trim13), found in Xenopus tropicalis (Western clawed frog).